A 150-amino-acid polypeptide reads, in one-letter code: Transcriptional repressor NrdR (150 aa).

A zinc finger lies at cysteine 3 to cysteine 34. The ATP-cone domain maps to proline 49–glutamate 139.

Belongs to the NrdR family. Zn(2+) is required as a cofactor.

In terms of biological role, negatively regulates transcription of bacterial ribonucleotide reductase nrd genes and operons by binding to NrdR-boxes. The protein is Transcriptional repressor NrdR of Citrifermentans bemidjiense (strain ATCC BAA-1014 / DSM 16622 / JCM 12645 / Bem) (Geobacter bemidjiensis).